The following is a 190-amino-acid chain: Natural killer cells antigen CD94 (190 aa).

Over 1–10 (MAAFRTTAWR) the chain is Cytoplasmic. The chain crosses the membrane as a helical; Signal-anchor for type II membrane protein span at residues 11–31 (LISGVLGVICLVLMAALGVLL). Residues 32 to 190 (KNSLTKRSVQ…FRYICKQQLI (159 aa)) are Extracellular-facing. 4 cysteine pairs are disulfide-bonded: cysteine 69–cysteine 81, cysteine 72–cysteine 83, cysteine 100–cysteine 185, and cysteine 163–cysteine 177. In terms of domain architecture, C-type lectin spans 79-186 (YQCNCYFISN…CEKKFRYICK (108 aa)). Asparagine 104 and asparagine 144 each carry an N-linked (GlcNAc...) asparagine glycan.

In terms of assembly, can form disulfide-bonded heterodimer with NKG2 family members KLRC1 and KLRC2. KLRD1-KLRC1 heterodimer interacts with peptide-bound MHC-E-B2M heterotrimeric complex. KLRD1 plays a prominent role in directly interacting with MHC-E. KLRD1-KLRC1 interacts with much higher affinity with peptide-bound MHC-E-B2M than KLRD1-KLRC2. Interacts with the adapter protein TYROBP/DAP12; this interaction is required for cell surface expression and cell activation.

It localises to the cell membrane. In terms of biological role, immune receptor involved in self-nonself discrimination. In complex with KLRC1 or KLRC2 on cytotoxic and regulatory lymphocyte subsets, recognizes non-classical major histocompatibility (MHC) class Ib molecule MHC-E loaded with self-peptides derived from the signal sequence of classical MHC class Ia and non-classical MHC class Ib molecules. Enables cytotoxic cells to monitor the expression of MHC class I molecules in healthy cells and to tolerate self. Primarily functions as a ligand binding subunit as it lacks the capacity to signal. Its function is as follows. KLRD1-KLRC1 acts as an immune inhibitory receptor. Key inhibitory receptor on natural killer (NK) cells that regulates their activation and effector functions. Dominantly counteracts T cell receptor signaling on a subset of memory/effector CD8-positive T cells as part of an antigen-driven response to avoid autoimmunity. On intraepithelial CD8-positive gamma-delta regulatory T cells triggers TGFB1 secretion, which in turn limits the cytotoxic programming of intraepithelial CD8-positive alpha-beta T cells, distinguishing harmless from pathogenic antigens. In MHC-E-rich tumor microenvironment, acts as an immune inhibitory checkpoint and may contribute to progressive loss of effector functions of NK cells and tumor-specific T cells, a state known as cell exhaustion. Upon MHC-E-peptide binding, transmits intracellular signals through KLRC1 immunoreceptor tyrosine-based inhibition motifs (ITIMs) by recruiting INPP5D/SHIP-1 and INPPL1/SHIP-2 tyrosine phosphatases to ITIMs, and ultimately opposing signals transmitted by activating receptors through dephosphorylation of proximal signaling molecules. KLRD1-KLRC2 acts as an immune activating receptor. On cytotoxic lymphocyte subsets recognizes MHC-E loaded with signal sequence-derived peptides from non-classical MHC class Ib MHC-G molecules, likely playing a role in the generation and effector functions of adaptive NK cells and in maternal-fetal tolerance during pregnancy. Regulates the effector functions of terminally differentiated cytotoxic lymphocyte subsets, and in particular may play a role in adaptive NK cell response to viral infection. Upon MHC-E-peptide binding, transmits intracellular signals via the adapter protein TYROBP/DAP12, triggering the phosphorylation of proximal signaling molecules and cell activation. This is Natural killer cells antigen CD94 (KLRD1) from Bos taurus (Bovine).